Here is a 525-residue protein sequence, read N- to C-terminus: Chromosomal replication initiator protein DnaA (525 aa).

The segment at 1-71 is domain I, interacts with DnaA modulators; sequence MNDFWQHCSA…SDLAREFWNT (71 aa). A domain II region spans residues 71-188; that stretch reads TPIEVQFVLD…GEADSMYERS (118 aa). The interval 160–182 is disordered; it reads AAAGRRTWRPGPGAAPANGGEAD. A compositionally biased stretch (low complexity) spans 169–181; that stretch reads PGPGAAPANGGEA. Residues 189–405 are domain III, AAA+ region; that stretch reads KLNPVLTFDN…GALRKILAYS (217 aa). ATP-binding residues include Gly-233, Gly-235, Lys-236, and Thr-237. Positions 406–525 are domain IV, binds dsDNA; that stretch reads KFHGREISIE…LHVLEQTLKG (120 aa).

It belongs to the DnaA family. Oligomerizes as a right-handed, spiral filament on DNA at oriC.

The protein resides in the cytoplasm. Functionally, plays an essential role in the initiation and regulation of chromosomal replication. ATP-DnaA binds to the origin of replication (oriC) to initiate formation of the DNA replication initiation complex once per cell cycle. Binds the DnaA box (a 9 base pair repeat at the origin) and separates the double-stranded (ds)DNA. Forms a right-handed helical filament on oriC DNA; dsDNA binds to the exterior of the filament while single-stranded (ss)DNA is stabiized in the filament's interior. The ATP-DnaA-oriC complex binds and stabilizes one strand of the AT-rich DNA unwinding element (DUE), permitting loading of DNA polymerase. After initiation quickly degrades to an ADP-DnaA complex that is not apt for DNA replication. Binds acidic phospholipids. In Burkholderia orbicola (strain MC0-3), this protein is Chromosomal replication initiator protein DnaA.